We begin with the raw amino-acid sequence, 1436 residues long: Non-structural polyprotein 1AB (1436 aa).

Residues 104–142 (KLIHKANALQERLRLSQEEKATLALDVQFLQHENVRLKE) are a coiled coil. 5 helical membrane-spanning segments follow: residues 156–176 (WIIM…YAHS), 239–259 (VFYY…LAIG), 286–306 (VLPT…TLMV), 313–333 (LLAI…LCFM), and 344–364 (GLIA…LTGT). Active-site charge relay system; for serine protease activity residues include H461, D489, and S551. Residues 587–620 (VKAPSQVELLKEEIERLKAQLNSATENATTVVTQ) adopt a coiled-coil conformation. Y693 carries the post-translational modification O-(5'-phospho-RNA)-tyrosine. Disordered stretches follow at residues 756–828 (AKPI…YSQT) and 913–934 (SKNK…EDQG). A RdRp catalytic domain is found at 1181 to 1307 (KHFIEFDWTR…TTPSVPDDYE (127 aa)).

The protein belongs to the astroviridae polyprotein 1AB family. As to quaternary structure, monomer. In terms of processing, cleaved by the viral and host proteases. The protease is probably autocatalytically cleaved.

Its subcellular location is the host membrane. It carries out the reaction RNA(n) + a ribonucleoside 5'-triphosphate = RNA(n+1) + diphosphate. Its function is as follows. Responsible for the cleavage of the polyprotein into functional products. Functionally, protein covalently attached to the 5' extremity of the genomic and subgenomic RNAs. It may serve as a primer for the replicase. This chain is Non-structural polyprotein 1AB (ORF1), found in Homo sapiens (Human).